The primary structure comprises 193 residues: Probable GTP-binding protein EngB (193 aa).

In terms of domain architecture, EngB-type G spans 22–193 (LLPEVALAGR…AAWEAIYRHL (172 aa)). Residues 30–37 (GRSNVGKS), 57–61 (GKTQT), 75–78 (DVPG), 142–145 (TKLD), and 174–176 (FSS) each bind GTP. S37 and T59 together coordinate Mg(2+).

Belongs to the TRAFAC class TrmE-Era-EngA-EngB-Septin-like GTPase superfamily. EngB GTPase family. Mg(2+) serves as cofactor.

Its function is as follows. Necessary for normal cell division and for the maintenance of normal septation. The polypeptide is Probable GTP-binding protein EngB (Exiguobacterium sibiricum (strain DSM 17290 / CCUG 55495 / CIP 109462 / JCM 13490 / 255-15)).